The sequence spans 196 residues: Putative NADH dehydrogenase/NAD(P)H nitroreductase SCO5049 (196 aa).

Belongs to the nitroreductase family. HadB/RutE subfamily. The cofactor is FMN.

This is Putative NADH dehydrogenase/NAD(P)H nitroreductase SCO5049 from Streptomyces coelicolor (strain ATCC BAA-471 / A3(2) / M145).